Consider the following 124-residue polypeptide: Large ribosomal subunit protein uL18 (124 aa).

The protein belongs to the universal ribosomal protein uL18 family. In terms of assembly, part of the 50S ribosomal subunit; part of the 5S rRNA/L5/L18/L25 subcomplex. Contacts the 5S and 23S rRNAs.

Its function is as follows. This is one of the proteins that bind and probably mediate the attachment of the 5S RNA into the large ribosomal subunit, where it forms part of the central protuberance. The protein is Large ribosomal subunit protein uL18 of Frankia casuarinae (strain DSM 45818 / CECT 9043 / HFP020203 / CcI3).